The sequence spans 455 residues: 3-isopropylmalate dehydratase large subunit (455 aa).

[4Fe-4S] cluster contacts are provided by cysteine 337, cysteine 397, and cysteine 400.

This sequence belongs to the aconitase/IPM isomerase family. LeuC type 1 subfamily. In terms of assembly, heterodimer of LeuC and LeuD. The cofactor is [4Fe-4S] cluster.

It catalyses the reaction (2R,3S)-3-isopropylmalate = (2S)-2-isopropylmalate. It participates in amino-acid biosynthesis; L-leucine biosynthesis; L-leucine from 3-methyl-2-oxobutanoate: step 2/4. In terms of biological role, catalyzes the isomerization between 2-isopropylmalate and 3-isopropylmalate, via the formation of 2-isopropylmaleate. The chain is 3-isopropylmalate dehydratase large subunit from Leuconostoc citreum (strain KM20).